Here is a 240-residue protein sequence, read N- to C-terminus: L-isoleucine-4-hydroxylase (240 aa).

3 residues coordinate Fe cation: His159, Asp161, and His212.

This sequence belongs to the iron/ascorbate-dependent oxidoreductase family. It depends on L-ascorbate as a cofactor. Fe(2+) serves as cofactor.

The catalysed reaction is L-isoleucine + 2-oxoglutarate + O2 = (4S)-4-hydroxy-L-isoleucine + succinate + CO2. Its function is as follows. Catalyzes the hydroxylation of L-isoleucine to produce (4S)-4-hydroxy-L-isoleucine. Can also catalyze the hydroxylation of L-leucine, L-norvaline, L-norleucine and L-allo-isoleucine, as well as the sulfoxidation of L-methionine, L-ethionine, S-methyl-L-cysteine, S-ethyl-L-cysteine, and S-allyl-L-cysteine. The protein is L-isoleucine-4-hydroxylase of Bacillus thuringiensis.